Here is a 253-residue protein sequence, read N- to C-terminus: 5'-nucleotidase SurE (253 aa).

Residues Asp8, Asp9, Ser40, and Asn93 each contribute to the a divalent metal cation site.

It belongs to the SurE nucleotidase family. It depends on a divalent metal cation as a cofactor.

It is found in the cytoplasm. It carries out the reaction a ribonucleoside 5'-phosphate + H2O = a ribonucleoside + phosphate. Its function is as follows. Nucleotidase that shows phosphatase activity on nucleoside 5'-monophosphates. The protein is 5'-nucleotidase SurE of Methylobacterium nodulans (strain LMG 21967 / CNCM I-2342 / ORS 2060).